Reading from the N-terminus, the 397-residue chain is Lysophospholipid transporter LplT (397 aa).

Residues 1–17 lie on the Periplasmic side of the membrane; that stretch reads MSESVHTNTSLWSKGMK. Residues 18-38 traverse the membrane as a helical segment; that stretch reads AVIVAQFLSAFGDNALLFATL. Over 39–52 the chain is Cytoplasmic; that stretch reads ALLKAQFYPEWSQP. The chain crosses the membrane as a helical span at residues 53 to 73; that stretch reads ILQMVFVGAYILFAPFVGQVA. At 74–90 the chain is on the periplasmic side; that stretch reads DSFAKGRVMMFANGLKL. Residues 91–111 traverse the membrane as a helical segment; the sequence is LGAASICFGINPFLGYTLVGV. Residues 112-144 lie on the Cytoplasmic side of the membrane; that stretch reads GAAAYSPAKYGILGELTTGSKLVKANGLMEAST. A helical membrane pass occupies residues 145–165; sequence IAAILLGSVAGGVLADWHVLV. A topological domain (periplasmic) is located at residue alanine 166. A helical membrane pass occupies residues 167–187; that stretch reads LAACALAYGGAVVANIYIPKL. The Cytoplasmic portion of the chain corresponds to 188–226; it reads AAARPGQSWNLINMTRSFLNACTSLWRNGETRFSLVGTS. Residues 227–247 traverse the membrane as a helical segment; sequence LFWGAGVTLRFLLVLWVPVAL. Topologically, residues 248–256 are periplasmic; that stretch reads GITDNATPT. Residues 257-277 traverse the membrane as a helical segment; it reads YLNAMVAIGIVVGAGAAAKLV. Residues 278–280 are Cytoplasmic-facing; the sequence is TLE. The helical transmembrane segment at 281–301 threads the bilayer; it reads TVSRCMPAGILIGVVVLIFSL. At 302–304 the chain is on the periplasmic side; that stretch reads QHE. The helical transmembrane segment at 305-325 threads the bilayer; sequence LLPAYALLMLIGVLGGFFVVP. The Cytoplasmic segment spans residues 326-343; the sequence is LNALLQERGKKSVGAGNA. A helical transmembrane segment spans residues 344–364; sequence IAVQNLGENSAMLLMLGIYSL. Topologically, residues 365–366 are periplasmic; that stretch reads AV. Residues 367-387 form a helical membrane-spanning segment; it reads MVGIPVVPIGIGFGALFALAI. Residues 388-397 are Cytoplasmic-facing; it reads TALWIWQRRH.

This sequence belongs to the major facilitator superfamily. LplT (TC 2.A.1.42) family.

It localises to the cell inner membrane. Functionally, catalyzes the facilitated diffusion of 2-acyl-glycero-3-phosphoethanolamine (2-acyl-GPE) into the cell. The polypeptide is Lysophospholipid transporter LplT (Escherichia coli (strain SMS-3-5 / SECEC)).